The following is a 318-amino-acid chain: NADH-ubiquinone oxidoreductase chain 1 (318 aa).

The next 8 helical transmembrane spans lie at 3–23, 69–89, 100–120, 135–155, 171–191, 213–233, 253–273, and 294–314; these read TTNI…LTLV, FMFT…WIPL, LGIL…LWSG, AVAQ…SLVL, HMWL…STLA, VEYA…NIIL, ELHT…FLWI, and LPLT…FASI.

This sequence belongs to the complex I subunit 1 family.

It is found in the mitochondrion inner membrane. The catalysed reaction is a ubiquinone + NADH + 5 H(+)(in) = a ubiquinol + NAD(+) + 4 H(+)(out). Its function is as follows. Core subunit of the mitochondrial membrane respiratory chain NADH dehydrogenase (Complex I) that is believed to belong to the minimal assembly required for catalysis. Complex I functions in the transfer of electrons from NADH to the respiratory chain. The immediate electron acceptor for the enzyme is believed to be ubiquinone. The sequence is that of NADH-ubiquinone oxidoreductase chain 1 (MT-ND1) from Choloepus didactylus (Southern two-toed sloth).